Reading from the N-terminus, the 394-residue chain is Aspergillopepsin-1 (394 aa).

Positions 1–20 (MVVFSKTAALVLGLSTAVSA) are cleaved as a signal peptide. The propeptide at 21-69 (APAPTRKGFTINQIARPANKTRTVNLPGLYARSLAKFGGTVPQSVKEAA) is activation peptide. The Peptidase A1 domain occupies 85–391 (YLTPVTVGKS…NSEGPKLGFA (307 aa)). Catalysis depends on residues Asp-101 and Asp-283. Cys-319 and Cys-354 are disulfide-bonded.

Belongs to the peptidase A1 family.

It is found in the secreted. The enzyme catalyses Hydrolysis of proteins with broad specificity. Generally favors hydrophobic residues in P1 and P1', but also accepts Lys in P1, which leads to activation of trypsinogen. Does not clot milk.. Secreted aspartic endopeptidase that allows assimilation of proteinaceous substrates. The scissile peptide bond is attacked by a nucleophilic water molecule activated by two aspartic residues in the active site. Shows a broad primary substrate specificity. Favors hydrophobic residues at the P1 and P1' positions, but also accepts a lysine residue in the P1 position, leading to the activation of trypsinogen and chymotrypsinogen A. This is Aspergillopepsin-1 from Aspergillus niger.